The primary structure comprises 190 residues: ATP synthase subunit b (190 aa).

A helical membrane pass occupies residues 24 to 44; sequence IVGSLICFVVILFFFWKLVLP.

The protein belongs to the ATPase B chain family. In terms of assembly, F-type ATPases have 2 components, F(1) - the catalytic core - and F(0) - the membrane proton channel. F(1) has five subunits: alpha(3), beta(3), gamma(1), delta(1), epsilon(1). F(0) has three main subunits: a(1), b(2) and c(10-14). The alpha and beta chains form an alternating ring which encloses part of the gamma chain. F(1) is attached to F(0) by a central stalk formed by the gamma and epsilon chains, while a peripheral stalk is formed by the delta and b chains.

It is found in the cell membrane. Its function is as follows. F(1)F(0) ATP synthase produces ATP from ADP in the presence of a proton or sodium gradient. F-type ATPases consist of two structural domains, F(1) containing the extramembraneous catalytic core and F(0) containing the membrane proton channel, linked together by a central stalk and a peripheral stalk. During catalysis, ATP synthesis in the catalytic domain of F(1) is coupled via a rotary mechanism of the central stalk subunits to proton translocation. Functionally, component of the F(0) channel, it forms part of the peripheral stalk, linking F(1) to F(0). The polypeptide is ATP synthase subunit b (Leifsonia xyli subsp. xyli (strain CTCB07)).